Consider the following 101-residue polypeptide: HssA/B-like protein 40 (101 aa).

The tract at residues 1–26 (MTLFSSISSMSTSMSGSKSSISSFGS) is disordered.

The protein belongs to the hssA/B family.

The sequence is that of HssA/B-like protein 40 (hssl40) from Dictyostelium discoideum (Social amoeba).